We begin with the raw amino-acid sequence, 97 residues long: Conotoxin Cal6.1b (97 aa).

An N-terminal signal peptide occupies residues 1–22 (MKLTTVLVVALLVLAACQFTVT). The segment at 22 to 46 (TDNSGDDPENPSLRSAGENQNPDST) is disordered. Positions 23 to 68 (DNSGDDPENPSLRSAGENQNPDSTKTITAWATRDMTNMRRGLNRPS) are excised as a propeptide. Cystine bridges form between Cys71–Cys87, Cys78–Cys91, and Cys86–Cys96.

The protein belongs to the conotoxin O1 superfamily. As to expression, expressed by the venom duct.

Its subcellular location is the secreted. In terms of biological role, probable neurotoxin with unknown target. Possibly targets ion channels. The sequence is that of Conotoxin Cal6.1b from Californiconus californicus (California cone).